Here is a 334-residue protein sequence, read N- to C-terminus: HTH-type transcriptional repressor PurR (334 aa).

One can recognise an HTH lacI-type domain in the interval Ala2–Cys56. Residues Ile4–Asn23 constitute a DNA-binding region (H-T-H motif). Residues Ser48–Cys56 mediate DNA binding. The hypoxanthine site is built by Phe73, Lys189, Phe220, and Asp274.

In terms of assembly, homodimer.

It functions in the pathway purine metabolism; purine nucleotide biosynthesis [regulation]. Its function is as follows. Is the main repressor of the genes involved in the de novo synthesis of purine nucleotides, regulating purB, purC, purEK, purF, purHD, purL, purMN and guaBA expression. PurR is allosterically activated to bind its cognate DNA by binding the purine corepressors, hypoxanthine or guanine, thereby effecting transcription repression. This Vibrio vulnificus (strain CMCP6) protein is HTH-type transcriptional repressor PurR.